The sequence spans 450 residues: MLDKLGQNLSDALNKLKNATFVDKKLVKEVIKDIQKALIQSDVNVKLVFNMSKEIERKAIDEAPPKGLSKKEHIVKIVYDELVKLLGETTQKLELDPSKKSVILLIGIQGSGKTTSAAKLARYIQKKGLRPGLIAADVYRPAAYQQLKQLSEKINVPLFGDETRTKTPVEITKEGMEKLKKVDVIIIDTAGRHKEEEGLLAEMKEMKDLTNPNEIILVIDGTLGQQAKNQAKAFKESVSEIGSILVTKLDGSAKGGGALSAVAEINAPIKFIGTGEGVDNLEQFDPKKFISRILGLGDLDSLLEKTEDIMDESTEESIDSILKGKFTLIELYAQLETISKMGPMKQILSMIPGMGGNMPKEAAQLTEAKLKRYKIMMDSMTMEEKENPELIKTSRLQRIAKGAGVKQEEIKDLLKYYSTTKNAFGNLKRGKMPKMGGQMGQIMRQLMYKD.

GTP-binding positions include 107–114, 188–192, and 247–250; these read GIQGSGKT, DTAGR, and TKLD.

Belongs to the GTP-binding SRP family. SRP54 subfamily. Part of the signal recognition particle protein translocation system, which is composed of SRP and FtsY. Archaeal SRP consists of a 7S RNA molecule of 300 nucleotides and two protein subunits: SRP54 and SRP19.

The protein localises to the cytoplasm. It catalyses the reaction GTP + H2O = GDP + phosphate + H(+). Functionally, involved in targeting and insertion of nascent membrane proteins into the cytoplasmic membrane. Binds to the hydrophobic signal sequence of the ribosome-nascent chain (RNC) as it emerges from the ribosomes. The SRP-RNC complex is then targeted to the cytoplasmic membrane where it interacts with the SRP receptor FtsY. This chain is Signal recognition particle 54 kDa protein, found in Methanococcus maripaludis (strain DSM 14266 / JCM 13030 / NBRC 101832 / S2 / LL).